Consider the following 512-residue polypeptide: Alpha-amylase 1 (512 aa).

Positions 1 to 25 are cleaved as a signal peptide; that stretch reads MRFSTEGFTSKVVAAILAFSRLVSA. Cysteine 66 and cysteine 74 are oxidised to a cystine. Tryptophan 119 lines the substrate pocket. Asparagine 157 serves as a coordination point for Ca(2+). Histidine 158 lines the substrate pocket. Cysteine 186 and cysteine 200 are disulfide-bonded. Glutamate 198 and aspartate 211 together coordinate Ca(2+). Residue asparagine 233 is glycosylated (N-linked (GlcNAc...) asparagine). Substrate is bound at residue arginine 240. Aspartate 242, histidine 246, and glutamate 266 together coordinate Ca(2+). Catalysis depends on aspartate 242, which acts as the Nucleophile. Residue 245 to 246 coordinates substrate; it reads KH. The active-site Proton donor is glutamate 266. Residue glycine 270 coordinates substrate. A disulfide bond links cysteine 276 and cysteine 319. Residues aspartate 333 and arginine 380 each contribute to the substrate site. Cysteines 475 and 510 form a disulfide.

Belongs to the glycosyl hydrolase 13 family. Ca(2+) serves as cofactor.

The protein localises to the secreted. The catalysed reaction is Endohydrolysis of (1-&gt;4)-alpha-D-glucosidic linkages in polysaccharides containing three or more (1-&gt;4)-alpha-linked D-glucose units.. Its activity is regulated as follows. Alpha-amylase expression underlies catabolite repression by glucose. The protein is Alpha-amylase 1 (AMY1) of Schwanniomyces occidentalis (Yeast).